Reading from the N-terminus, the 679-residue chain is F-box/LRR-repeat protein 5 (679 aa).

The interval 1-159 (MAPFPDEVDV…IKQQVMLQHC (159 aa)) is hemerythrin-like. 7 residues coordinate Fe(3+): His15, His57, Glu58, Glu61, His80, His126, and Glu130. In terms of domain architecture, F-box spans 205 to 251 (RVSVSSLPQELLLRIFRFLGPQDLCRCAQVCSVWTQVTRTGSLWRHL). LRR repeat units follow at residues 316 to 342 (EKLL…SLAY), 343 to 367 (SSTL…LDLT), 368 to 395 (QTDV…DLSG), 396 to 426 (CDKI…LLQA), 565 to 595 (CWFE…SLSG), 596 to 623 (CHQI…NLSG), and 624 to 649 (CPLI…HFYY). [2Fe-2S] cluster contacts are provided by Cys650, Cys664, Cys674, and Cys675.

As to quaternary structure, part of a SCF (SKP1-cullin-F-box) protein ligase complex. The cofactor is [2Fe-2S] cluster. In terms of processing, ubiquitinated upon iron and oxygen depletion, leading to its degradation by the proteasome. Ubiquitination is regulated by the hemerythrin-like region that acts as an oxygen and iron sensor.

It is found in the cytoplasm. The protein resides in the perinuclear region. Its subcellular location is the nucleus. It participates in protein modification; protein ubiquitination. Its function is as follows. Component of some SCF (SKP1-cullin-F-box) protein ligase complex that plays a central role in iron homeostasis by promoting the ubiquitination and subsequent degradation of ireb2/irp2. Upon high iron and oxygen level, it specifically recognizes and binds ireb2/irp2, promoting its ubiquitination and degradation by the proteasome. This chain is F-box/LRR-repeat protein 5 (fbxl5), found in Danio rerio (Zebrafish).